Reading from the N-terminus, the 178-residue chain is Putative metal-dependent hydrolase GTNG_0529 (178 aa).

Histidine 68, histidine 161, and histidine 165 together coordinate Zn(2+).

The protein belongs to the metal hydrolase YfiT family. As to quaternary structure, homodimer. Requires Zn(2+) as cofactor.

The protein resides in the cytoplasm. Possible metal-dependent hydrolase. The protein is Putative metal-dependent hydrolase GTNG_0529 of Geobacillus thermodenitrificans (strain NG80-2).